The primary structure comprises 357 residues: Heme A synthase (357 aa).

Transmembrane regions (helical) follow at residues 24 to 44 (LVRY…MVGG), 110 to 130 (MLAR…WVTG), 140 to 160 (MLGL…MVAS), 175 to 195 (IHLT…RGLV), and 209 to 229 (FAGW…LVAG). His272 contributes to the heme binding site. A run of 3 helical transmembrane segments spans residues 274–294 (MFAY…WKQV), 303–323 (TIVL…TLLM), and 325–345 (VPLH…AFAV). Heme is bound at residue His333.

It belongs to the COX15/CtaA family. Type 2 subfamily. In terms of assembly, interacts with CtaB. Heme b is required as a cofactor.

It localises to the cell membrane. It carries out the reaction Fe(II)-heme o + 2 A + H2O = Fe(II)-heme a + 2 AH2. Its pathway is porphyrin-containing compound metabolism; heme A biosynthesis; heme A from heme O: step 1/1. Its function is as follows. Catalyzes the conversion of heme O to heme A by two successive hydroxylations of the methyl group at C8. The first hydroxylation forms heme I, the second hydroxylation results in an unstable dihydroxymethyl group, which spontaneously dehydrates, resulting in the formyl group of heme A. This Brucella anthropi (strain ATCC 49188 / DSM 6882 / CCUG 24695 / JCM 21032 / LMG 3331 / NBRC 15819 / NCTC 12168 / Alc 37) (Ochrobactrum anthropi) protein is Heme A synthase.